The primary structure comprises 1002 residues: DNA-directed RNA polymerase 1B, mitochondrial (1002 aa).

The N-terminal 21 residues, M1–A21, are a transit peptide targeting the mitochondrion. Catalysis depends on residues D703, K778, and D935.

It belongs to the phage and mitochondrial RNA polymerase family.

It is found in the mitochondrion. The catalysed reaction is RNA(n) + a ribonucleoside 5'-triphosphate = RNA(n+1) + diphosphate. Its function is as follows. DNA-dependent RNA polymerase catalyzes the transcription of DNA into RNA using the four ribonucleoside triphosphates as substrates. This chain is DNA-directed RNA polymerase 1B, mitochondrial (RPOT1-TOM), found in Nicotiana tabacum (Common tobacco).